A 130-amino-acid chain; its full sequence is Protein ApaG (130 aa).

An ApaG domain is found at 3-127 (RAVTRRIEVT…FSLDSPEGKR (125 aa)).

The chain is Protein ApaG from Rhodopseudomonas palustris (strain ATCC BAA-98 / CGA009).